The following is a 104-amino-acid chain: Large ribosomal subunit protein uL24 (104 aa).

It belongs to the universal ribosomal protein uL24 family. Part of the 50S ribosomal subunit.

In terms of biological role, one of two assembly initiator proteins, it binds directly to the 5'-end of the 23S rRNA, where it nucleates assembly of the 50S subunit. Its function is as follows. One of the proteins that surrounds the polypeptide exit tunnel on the outside of the subunit. The polypeptide is Large ribosomal subunit protein uL24 (Citrobacter koseri (strain ATCC BAA-895 / CDC 4225-83 / SGSC4696)).